Here is a 481-residue protein sequence, read N- to C-terminus: Dual specificity protein kinase CLK4 (481 aa).

Disordered regions lie at residues 1-46 (MRHS…CKPH) and 102-143 (SKSS…EDDE). Residues 8–24 (HCPDWDSRESWGHESYR) show a composition bias toward basic and acidic residues. 2 stretches are compositionally biased toward basic residues: residues 25–34 (GSHKRKRRSH) and 106–136 (VRSRRSSPKRKRNRHCSSHQSRSKSHRRKRS). Phosphoserine is present on residues S136 and S138. The 317-residue stretch at 159 to 475 (YEIVDTLGEG…LDEALQHPFF (317 aa)) folds into the Protein kinase domain. ATP-binding positions include 165–173 (LGEGAFGKV) and K189. The active-site Proton acceptor is the D286.

It belongs to the protein kinase superfamily. CMGC Ser/Thr protein kinase family. Lammer subfamily. Interacts with UBL5. Autophosphorylates on all three types of residues. Expressed in liver, kidney, heart, muscle, brain and endothelial cells.

Its subcellular location is the nucleus. The enzyme catalyses L-seryl-[protein] + ATP = O-phospho-L-seryl-[protein] + ADP + H(+). The catalysed reaction is L-threonyl-[protein] + ATP = O-phospho-L-threonyl-[protein] + ADP + H(+). It catalyses the reaction L-tyrosyl-[protein] + ATP = O-phospho-L-tyrosyl-[protein] + ADP + H(+). TG003 inhibits its kinase activity and affects the regulation of alternative splicing mediated by phosphorylation of SR proteins. Its function is as follows. Dual specificity kinase acting on both serine/threonine and tyrosine-containing substrates. Phosphorylates serine- and arginine-rich (SR) proteins of the spliceosomal complex and may be a constituent of a network of regulatory mechanisms that enable SR proteins to control RNA splicing. Phosphorylates SRSF1 and SRSF3. Required for the regulation of alternative splicing of MAPT/TAU. Regulates the alternative splicing of tissue factor (F3) pre-mRNA in endothelial cells. The protein is Dual specificity protein kinase CLK4 (CLK4) of Homo sapiens (Human).